The primary structure comprises 755 residues: MKFNQFSYIPVSPETAYQELRSLGFEVSLDASAKANFESFVRKYFLFFEDTDLALKNWIADPETDLLSFFQSDRPLTAEVFGLVALQLLGFVPNVDFTDSVAFLEKMAFPIAFDGSLNNLHQLLATRTQSGNTLIDQLVAQDLIPISNDYVFFNGKSLATFDTNQLHREVVYVETPVDTDKDGLLDLVKVTILRPNVDFPVPAMMTASPYQQGTNEPSSDKLTHKMEGDLLVKPAGKISLSRPEIKAPEADLTPINPVTKAEERFAHTDTYTLNDYMLARGVASIYVSGVGTFNSEGFMTSGDYQQVLAYKAVIDWLNGRARAFTSRSRQHTITADWASGKVTTTGLSYLGTMSNALATTGVDGLEMVIAEAGISSWYDYYRENGLLVSPGGYPGEDLDTLTEFTYSRALLAGEYLRHQKDYEAYLNELSTAIDRKHGDYNQFWHDRNYVQFADRVKATVVFTHGSQDWNVKPINVYQMFRALPKSLEKHLFFHNGAHVYMNAWQSIDFRESMNALICQKLLDLDNGYTLPTVIWQNNQSEQTWEVLDNFGHDNGKHIQLGKAEASIANHYEEEIFAKYGKAYQSFKDDLFMDKANAITLDFELDQDIQINGRVHLELRVKSSTNRGLISAQVLEMGDKKYLAPIPELKRMNVDNGRLFKEEALRELPFKQAKYRVITKGHLNLQNRKDLLSIENVTPNEWMTIGLDLQPTIYKLNKGDKLRLVLYTTDFEHTIRDNSDYEVTVDLSQSKMTLPY.

Residues serine 348, aspartate 468, and histidine 498 each act as charge relay system in the active site.

Belongs to the peptidase S15 family. As to quaternary structure, homodimer.

The protein resides in the cytoplasm. The catalysed reaction is Hydrolyzes Xaa-Pro-|- bonds to release unblocked, N-terminal dipeptides from substrates including Ala-Pro-|-p-nitroanilide and (sequentially) Tyr-Pro-|-Phe-Pro-|-Gly-Pro-|-Ile.. Functionally, removes N-terminal dipeptides sequentially from polypeptides having unsubstituted N-termini provided that the penultimate residue is proline. The sequence is that of Xaa-Pro dipeptidyl-peptidase from Streptococcus thermophilus (strain ATCC BAA-491 / LMD-9).